Here is a 248-residue protein sequence, read N- to C-terminus: tRNA pseudouridine synthase A (248 aa).

Catalysis depends on Asp-55, which acts as the Nucleophile. Tyr-114 contributes to the substrate binding site.

This sequence belongs to the tRNA pseudouridine synthase TruA family. In terms of assembly, homodimer.

The catalysed reaction is uridine(38/39/40) in tRNA = pseudouridine(38/39/40) in tRNA. In terms of biological role, formation of pseudouridine at positions 38, 39 and 40 in the anticodon stem and loop of transfer RNAs. The protein is tRNA pseudouridine synthase A of Rhodopseudomonas palustris (strain ATCC BAA-98 / CGA009).